Consider the following 360-residue polypeptide: sn-glycerol-3-phosphate import ATP-binding protein UgpC (360 aa).

The region spanning 4–235 is the ABC transporter domain; it reads LSLKGVRKSY…PATTFVASFI (232 aa). 37–44 provides a ligand contact to ATP; it reads GPSGCGKS.

The protein belongs to the ABC transporter superfamily. sn-glycerol-3-phosphate importer (TC 3.A.1.1.3) family. In terms of assembly, the complex is composed of two ATP-binding proteins (UgpC), two transmembrane proteins (UgpA and UgpE) and a solute-binding protein (UgpB).

It localises to the cell inner membrane. It carries out the reaction sn-glycerol 3-phosphate(out) + ATP + H2O = sn-glycerol 3-phosphate(in) + ADP + phosphate + H(+). In terms of biological role, part of the ABC transporter complex UgpBAEC involved in sn-glycerol-3-phosphate (G3P) import. Responsible for energy coupling to the transport system. The sequence is that of sn-glycerol-3-phosphate import ATP-binding protein UgpC from Burkholderia pseudomallei (strain 1710b).